Consider the following 468-residue polypeptide: Dihydrolipoyl dehydrogenase (468 aa).

FAD contacts are provided by residues 39–47 (EKGNLGGVC), K56, and A119. C47 and C52 are disulfide-bonded. Residues 183–187 (GGGYI), E206, and 271–274 (TVGR) contribute to the NAD(+) site. Positions 314 and 322 each coordinate FAD. H446 (proton acceptor) is an active-site residue.

This sequence belongs to the class-I pyridine nucleotide-disulfide oxidoreductase family. In terms of assembly, homodimer. FAD serves as cofactor.

Its subcellular location is the cytoplasm. It localises to the membrane. It carries out the reaction N(6)-[(R)-dihydrolipoyl]-L-lysyl-[protein] + NAD(+) = N(6)-[(R)-lipoyl]-L-lysyl-[protein] + NADH + H(+). Lipoamide dehydrogenase is a component of the alpha-ketoacid dehydrogenase complexes. The protein is Dihydrolipoyl dehydrogenase (pdhD) of Staphylococcus aureus (strain COL).